The chain runs to 306 residues: Aspartate carbamoyltransferase catalytic subunit (306 aa).

Carbamoyl phosphate contacts are provided by Arg54 and Thr55. Lys83 lines the L-aspartate pocket. Carbamoyl phosphate contacts are provided by Arg104, His132, and Gln135. Residues Arg165 and Arg227 each coordinate L-aspartate. Carbamoyl phosphate-binding residues include Leu266 and Pro267.

The protein belongs to the aspartate/ornithine carbamoyltransferase superfamily. ATCase family. As to quaternary structure, heterododecamer (2C3:3R2) of six catalytic PyrB chains organized as two trimers (C3), and six regulatory PyrI chains organized as three dimers (R2).

The catalysed reaction is carbamoyl phosphate + L-aspartate = N-carbamoyl-L-aspartate + phosphate + H(+). It functions in the pathway pyrimidine metabolism; UMP biosynthesis via de novo pathway; (S)-dihydroorotate from bicarbonate: step 2/3. Catalyzes the condensation of carbamoyl phosphate and aspartate to form carbamoyl aspartate and inorganic phosphate, the committed step in the de novo pyrimidine nucleotide biosynthesis pathway. The polypeptide is Aspartate carbamoyltransferase catalytic subunit (Finegoldia magna (strain ATCC 29328 / DSM 20472 / WAL 2508) (Peptostreptococcus magnus)).